We begin with the raw amino-acid sequence, 156 residues long: Longistatin (156 aa).

Positions 1-21 (MTHRRLLWALCVAALLGVVAA) are cleaved as a signal peptide. EF-hand domains are found at residues 70 to 105 (SQDE…TNHH) and 123 to 156 (DIAS…TNQI). Positions 83, 85, 87, 89, 94, 135, 137, 139, 141, and 146 each coordinate Ca(2+).

In terms of assembly, interacts with host fibrin. Interacts with human RAGE/AGER. In terms of tissue distribution, saliva (at protein level). Salivary gland (at protein level). Not detected in midgut, ovary, trachea, Malpighian tubule system, synganglion and cuticle.

Its subcellular location is the secreted. The protein resides in the cytoplasm. With respect to regulation, resistant to inhibition by host SERPINE1. Inhibited by PMSF, aprotinin, antipain and leupeptin. Inhibited by Zn(2+). Functionally, anticoagulant and fibrinolytic protease that modulates blood feeding of ticks on vertebrate hosts. Degrades host fibrinogen and delays fibrin clot formation. Promotes lysis of fibrin clots in the host by activating host plasminogen in the presence of soluble fibrin. Binds Ca(2+). Hydrolyzes serine protease-specific substrates. Required for the formation of a blood pool, an accumulation of blood and tissue fluid developed at the tick's feeding site. Blocks activation of host AGER/RAGE. Reduces AGER/RAGE-dependent production of reactive oxygen species (ROS) in human endothelial cells. Prevents AGER/RAGE-dependent activation of NF-kappa-B and suppresses expression of adhesion molecules, such as VCAM1, ICAM1 and SELE, and secretion of cytokines, such as CSF3/GCSF and TGF-beta, in human endothelial cells. Suppresses RAGE/AGER-mediated migration of mouse peritoneal resident cells. Reduces AGER/RAGE-mediated inflammation in mice tissues. The polypeptide is Longistatin (Haemaphysalis longicornis (Bush tick)).